Reading from the N-terminus, the 261-residue chain is Claudin-18 (261 aa).

The Cytoplasmic portion of the chain corresponds to 1–6; sequence MSTTRC. Residues 7 to 27 form a helical membrane-spanning segment; sequence QVVGFLLSILGLAGCIVATEM. Over 28–80 the chain is Extracellular; it reads DMWSTQDLYDNPVTAVFQYEGLWRSCVQQSSGFTECRPYLTILGLPAMLQAVR. A helical membrane pass occupies residues 81–101; it reads ALMIVGIVLSVIGLLVAIFAL. Over 102-122 the chain is Cytoplasmic; that stretch reads KCIRMGNMDDSAKAKMTLTSG. The helical transmembrane segment at 123-143 threads the bilayer; sequence IMFIIAGLCAIAGVSVFANML. The Extracellular segment spans residues 144-174; the sequence is VTNFWMSTASMFTSMGGMVQTVQTRYTFGAA. The helical transmembrane segment at 175-195 threads the bilayer; sequence LFVGWVAGGLTLIGGVLMCIA. The interval 195-261 is required for role in regulation of RANKL-induced osteoclast differentiation; the sequence is ACRGLAPEET…QSPPSKYDYV (67 aa). The Cytoplasmic portion of the chain corresponds to 196-261; it reads CRGLAPEETN…QSPPSKYDYV (66 aa). A Phosphoserine modification is found at S214. The disordered stretch occupies residues 228 to 261; that stretch reads SSGFESNTRNKKIYDGGARTEDEGQSPPSKYDYV. The segment covering 239 to 249 has biased composition (basic and acidic residues); it reads KIYDGGARTED.

The protein belongs to the claudin family. As to quaternary structure, interacts with TJP2/ZO-2. Interacts with TJP1/ZO-1. Interacts with YAP1 (phosphorylated); the interaction sequesters YAP1 away from the nucleus and thereby restricts transcription of YAP1 target genes. Interacts with CLDN19.

Its subcellular location is the cell junction. The protein resides in the tight junction. The protein localises to the cell membrane. Functionally, involved in alveolar fluid homeostasis via regulation of alveolar epithelial tight junction composition and therefore ion transport and solute permeability, potentially via downstream regulation of the actin cytoskeleton organization and beta-2-adrenergic signaling. Required for lung alveolarization and maintenance of the paracellular alveolar epithelial barrier. Acts to maintain epithelial progenitor cell proliferation and organ size, via regulation of YAP1 localization away from the nucleus and thereby restriction of YAP1 target gene transcription. Acts as a negative regulator of RANKL-induced osteoclast differentiation, potentially via relocation of TJP2/ZO-2 away from the nucleus, subsequently involved in bone resorption in response to calcium deficiency. Mediates the osteoprotective effects of estrogen, potentially via acting downstream of estrogen signaling independently of RANKL signaling pathways. In Bos taurus (Bovine), this protein is Claudin-18 (CLDN18).